The following is a 207-amino-acid chain: 2,3-bisphosphoglycerate-dependent phosphoglycerate mutase (207 aa).

Substrate is bound by residues 10-17, 23-24, Arg62, 89-92, Lys100, 116-117, and 160-161; these read RHGQSEWN, TG, ERDY, RR, and GN. His11 serves as the catalytic Tele-phosphohistidine intermediate. Glu89 functions as the Proton donor/acceptor in the catalytic mechanism.

Belongs to the phosphoglycerate mutase family. BPG-dependent PGAM subfamily. Homodimer.

The catalysed reaction is (2R)-2-phosphoglycerate = (2R)-3-phosphoglycerate. Its pathway is carbohydrate degradation; glycolysis; pyruvate from D-glyceraldehyde 3-phosphate: step 3/5. Its function is as follows. Catalyzes the interconversion of 2-phosphoglycerate and 3-phosphoglycerate. The sequence is that of 2,3-bisphosphoglycerate-dependent phosphoglycerate mutase from Xanthobacter autotrophicus (strain ATCC BAA-1158 / Py2).